A 788-amino-acid chain; its full sequence is Cadherin-10 (788 aa).

A signal peptide spans 1-22 (MTIYQFLRLFVLWACLPHFCCP). Positions 23-54 (ELTFRRTPGIQQMTAESRAPRSDGKILHRQKR) are excised as a propeptide. At 23-613 (ELTFRRTPGI…LLPAGLSTGA (591 aa)) the chain is on the extracellular side. 5 Cadherin domains span residues 56–160 (WMWN…EPTF), 161–269 (PEEI…PPRF), 270–384 (PQNT…PPVF), 385–489 (SRSS…APQF), and 489–603 (FAVF…AEAL). A glycan (N-linked (GlcNAc...) asparagine) is linked at Asn-256. Residues Asn-456 and Asn-534 are each glycosylated (N-linked (GlcNAc...) asparagine). A helical membrane pass occupies residues 614 to 634 (LIAILLCIIILLVIVVLFAAL). At 635–788 (KRQRKKEPLI…YGGGESDKDA (154 aa)) the chain is on the cytoplasmic side. The residue at position 784 (Ser-784) is a Phosphoserine.

It localises to the cell membrane. In terms of biological role, cadherins are calcium-dependent cell adhesion proteins. They preferentially interact with themselves in a homophilic manner in connecting cells; cadherins may thus contribute to the sorting of heterogeneous cell types. The protein is Cadherin-10 (Cdh10) of Mus musculus (Mouse).